Reading from the N-terminus, the 138-residue chain is Large ribosomal subunit protein uL16 (138 aa).

Positions 1-17 (MLIPRKVKHRKQHHPRQ) are enriched in basic residues. The disordered stretch occupies residues 1–23 (MLIPRKVKHRKQHHPRQRGIASG).

This sequence belongs to the universal ribosomal protein uL16 family. Part of the 50S ribosomal subunit.

In terms of biological role, binds 23S rRNA and is also seen to make contacts with the A and possibly P site tRNAs. The polypeptide is Large ribosomal subunit protein uL16 (Mycobacterium sp. (strain JLS)).